Reading from the N-terminus, the 99-residue chain is NADH-quinone oxidoreductase subunit K (99 aa).

Helical transmembrane passes span 3–23, 28–48, and 59–79; these read PDNY…GVLL, IVVF…FVAF, and VVAF…LAII.

The protein belongs to the complex I subunit 4L family. In terms of assembly, NDH-1 is composed of 14 different subunits. Subunits NuoA, H, J, K, L, M, N constitute the membrane sector of the complex.

Its subcellular location is the cell membrane. The enzyme catalyses a quinone + NADH + 5 H(+)(in) = a quinol + NAD(+) + 4 H(+)(out). NDH-1 shuttles electrons from NADH, via FMN and iron-sulfur (Fe-S) centers, to quinones in the respiratory chain. The immediate electron acceptor for the enzyme in this species is believed to be a menaquinone. Couples the redox reaction to proton translocation (for every two electrons transferred, four hydrogen ions are translocated across the cytoplasmic membrane), and thus conserves the redox energy in a proton gradient. The protein is NADH-quinone oxidoreductase subunit K of Mycobacterium sp. (strain JLS).